Consider the following 429-residue polypeptide: 3-phosphoshikimate 1-carboxyvinyltransferase (429 aa).

Positions 23, 24, and 28 each coordinate 3-phosphoshikimate. Lysine 23 is a binding site for phosphoenolpyruvate. Phosphoenolpyruvate is bound by residues glycine 95 and arginine 123. 3-phosphoshikimate-binding residues include serine 168, glutamine 170, aspartate 316, and lysine 343. Glutamine 170 contributes to the phosphoenolpyruvate binding site. The Proton acceptor role is filled by aspartate 316. Residues arginine 347 and arginine 389 each coordinate phosphoenolpyruvate.

The protein belongs to the EPSP synthase family. As to quaternary structure, monomer.

It is found in the cytoplasm. The enzyme catalyses 3-phosphoshikimate + phosphoenolpyruvate = 5-O-(1-carboxyvinyl)-3-phosphoshikimate + phosphate. It participates in metabolic intermediate biosynthesis; chorismate biosynthesis; chorismate from D-erythrose 4-phosphate and phosphoenolpyruvate: step 6/7. In terms of biological role, catalyzes the transfer of the enolpyruvyl moiety of phosphoenolpyruvate (PEP) to the 5-hydroxyl of shikimate-3-phosphate (S3P) to produce enolpyruvyl shikimate-3-phosphate and inorganic phosphate. The protein is 3-phosphoshikimate 1-carboxyvinyltransferase of Bacillus cereus (strain ATCC 10987 / NRS 248).